Reading from the N-terminus, the 388-residue chain is NADPH-dependent butanol dehydrogenase (388 aa).

Belongs to the iron-containing alcohol dehydrogenase family.

This enzyme has activity using butanol and ethanol as substrates. This chain is NADPH-dependent butanol dehydrogenase (adh1), found in Clostridium saccharobutylicum.